Here is a 1311-residue protein sequence, read N- to C-terminus: MSLLQSALDFLAGPGSLGGASGRDQSDFVGQTVELGELRLRVRRVLAEGGFAFVYEAQDVGSGREYALKRLLSNEEEKNRAIIQEVCFMKKLSGHPNIVQFCSAASIGKEESDTGQAEFLLLTELCKGQLVEFLKKMESRGPLSCDTVLKIFYQTCRAVQHMHRQKPPIIHRDLKVENLLLSNQGTIKLCDFGSATTISHYPDYSWSAQRRALVEEEITRNTTPMYRTPEIIDLYSNFPIGEKQDIWALGCILYLLCFRQHPFEDGAKLRIVNGKYSIPPHDTQYTVFHSLIRAMLQVNPEERLSIAEVVHQLQEIAAARNVNPKSPITELLEQNGGYGSATLSRGPPPPVGPAGSGYSGGLALAEYDQPYGGFLDILRGGTERLFTNLKDTSSKVIQSVANYAKGDLDISYITSRIAVMSFPAEGVESALKNNIEDVRLFLDSKHPGHYAVYNLSPRTYRPSRFHNRVSECGWAARRAPHLHTLYNICRNMHAWLRQDHKNVCVVHCMDGRAASAVAVCSFLCFCRLFSTAEAAVYMFSMKRCPPGIWPSHKRYIEYMCDMVAEEPITPHSKPILVRAVVMTPVPLFSKQRSGCRPFCEVYVGDERVASTSQEYDKMRDFKIEDGKAVIPLGVTVQGDVLIVIYHARSTLGGRLQAKMASMKMFQIQFHTGFVPRNATTVKFAKYDLDACDIQEKYPDLFQVNLEVEVEPRDRPSREAPPWENSSMRGLNPKILFSSREEQQDILSKFGKPELPRQPGSTAQYDAGAGSPEAEPTDSDSPPSSSADASRFLHTLDWQEEKEAETGAENASSKESESALMEDRDESEVSDEGGSPISSEGQEPRADPEPPGLAAGLVQQDLVFEVETPAVLPEPVPQEDGVDLLGLHSEVGAGPAVPPQACKAPSSNTDLLSCLLGPPEAASQGPPEDLLSEDPLLLASPAPPLSVQSTPRGGPPAAADPFGPLLPSSGNNSQPCSNPDLFGEFLNSDSVTVPPSFPSAHSAPPPSCSADFLHLGDLPGEPSKMTASSSNPDLLGGWAAWTETAASAVAPTPATEGPLFSPGGQPAPCGSQASWTKSQNPDPFADLGDLSSGLQGSPAGFPPGGFIPKTATTPKGSSSWQTSRPPAQGASWPPQAKPPPKACTQPRPNYASNFSVIGAREERGVRAPSFAQKPKVSENDFEDLLSNQGFSSRSDKKGPKTIAEMRKQDLAKDTDPLKLKLLDWIEGKERNIRALLSTLHTVLWDGESRWTPVGMADLVAPEQVKKHYRRAVLAVHPDKAAGQPYEQHAKMIFMELNDAWSEFENQGSRPLF.

At Ser2 the chain carries N-acetylserine. Phosphoserine occurs at positions 2 and 16. Residues 40 to 314 (LRVRRVLAEG…SIAEVVHQLQ (275 aa)) enclose the Protein kinase domain. Residue Asp173 is the Proton acceptor of the active site. The region spanning 399–566 (SVANYAKGDL…EYMCDMVAEE (168 aa)) is the Phosphatase tensin-type domain. Residue Ser456 is modified to Phosphoserine. A C2 tensin-type domain is found at 572-710 (SKPILVRAVV…FQVNLEVEVE (139 aa)). 2 disordered regions span residues 709–729 (VEPR…SMRG) and 749–788 (FGKP…SADA). Residue Ser770 is modified to Phosphoserine. Over residues 770–788 (SPEAEPTDSDSPPSSSADA) the composition is skewed to low complexity. The residue at position 776 (Thr776) is a Phosphothreonine. Ser783 is subject to Phosphoserine. Thr794 carries the post-translational modification Phosphothreonine. 3 disordered regions span residues 801–860 (KEAE…VQQD), 913–1035 (CLLG…DLLG), and 1047–1150 (AVAP…PNYA). Phosphoserine is present on residues Ser811, Ser826, Ser829, Ser834, and Ser939. Low complexity-rich tracts occupy residues 925–939 (PPED…LLAS) and 950–966 (PRGG…PLLP). 2 stretches are compositionally biased toward polar residues: residues 967–976 (SSGNNSQPCS) and 1070–1080 (SQASWTKSQNP). Ser1096 is subject to Phosphoserine. A compositionally biased stretch (polar residues) spans 1109-1124 (TATTPKGSSSWQTSRP). Arg1123 is modified (omega-N-methylarginine). Phosphoserine occurs at positions 1176 and 1185. One can recognise a J domain in the interval 1247-1311 (SRWTPVGMAD…FENQGSRPLF (65 aa)).

This sequence belongs to the protein kinase superfamily. Ser/Thr protein kinase family. As to expression, ubiquitous. Highest in testis.

It localises to the cytoplasm. It is found in the perinuclear region. Its subcellular location is the golgi apparatus. The protein localises to the trans-Golgi network. The protein resides in the cell junction. It localises to the focal adhesion. It is found in the cytoplasmic vesicle. Its subcellular location is the clathrin-coated vesicle. The catalysed reaction is L-seryl-[protein] + ATP = O-phospho-L-seryl-[protein] + ADP + H(+). It catalyses the reaction L-threonyl-[protein] + ATP = O-phospho-L-threonyl-[protein] + ADP + H(+). Associates with cyclin G and CDK5. Seems to act as an auxilin homolog that is involved in the uncoating of clathrin-coated vesicles by Hsc70 in non-neuronal cells. Expression oscillates slightly during the cell cycle, peaking at G1. May play a role in clathrin-mediated endocytosis and intracellular trafficking, and in the dynamics of clathrin assembly/disassembly. This Homo sapiens (Human) protein is Cyclin-G-associated kinase.